The sequence spans 498 residues: GTPase Der (498 aa).

EngA-type G domains lie at 3 to 167 (PVVA…FDDL) and 210 to 383 (IKLA…KSAT). Residues 9–16 (GRPNVGKS), 57–61 (DTGGI), 119–122 (NKID), 216–223 (GRPNVGKS), 263–267 (DTAGV), and 328–331 (NKWD) each bind GTP. In terms of domain architecture, KH-like spans 384–468 (TRVGTSVLTR…PIRINFQNSD (85 aa)).

It belongs to the TRAFAC class TrmE-Era-EngA-EngB-Septin-like GTPase superfamily. EngA (Der) GTPase family. As to quaternary structure, associates with the 50S ribosomal subunit.

GTPase that plays an essential role in the late steps of ribosome biogenesis. The sequence is that of GTPase Der from Vibrio campbellii (strain ATCC BAA-1116).